The primary structure comprises 381 residues: Chaperone protein DnaJ (381 aa).

A J domain is found at 5–70 (DYYEVLGVSR…DKKAAYDRYG (66 aa)). The segment at 140-218 (GVQKTINVPA…CHGAGRVEKE (79 aa)) adopts a CR-type zinc-finger fold. Zn(2+)-binding residues include C153, C156, C170, C173, C192, C195, C206, and C209. CXXCXGXG motif repeat units follow at residues 153 to 160 (CDACKGTG), 170 to 177 (CPTCSGMG), 192 to 199 (CPTCNGMG), and 206 to 213 (CKVCHGAG).

Belongs to the DnaJ family. As to quaternary structure, homodimer. It depends on Zn(2+) as a cofactor.

It localises to the cytoplasm. Its function is as follows. Participates actively in the response to hyperosmotic and heat shock by preventing the aggregation of stress-denatured proteins and by disaggregating proteins, also in an autonomous, DnaK-independent fashion. Unfolded proteins bind initially to DnaJ; upon interaction with the DnaJ-bound protein, DnaK hydrolyzes its bound ATP, resulting in the formation of a stable complex. GrpE releases ADP from DnaK; ATP binding to DnaK triggers the release of the substrate protein, thus completing the reaction cycle. Several rounds of ATP-dependent interactions between DnaJ, DnaK and GrpE are required for fully efficient folding. Also involved, together with DnaK and GrpE, in the DNA replication of plasmids through activation of initiation proteins. The polypeptide is Chaperone protein DnaJ (Cereibacter sphaeroides (strain KD131 / KCTC 12085) (Rhodobacter sphaeroides)).